The sequence spans 46 residues: Alpha-1-antiproteinase (46 aa).

Residue Ser30 is modified to Phosphoserine.

This sequence belongs to the serpin family. N-glycosylated; contains bi- and triantennary glycans with a bisecting N-acetylglucosamine and fucose residue. In terms of tissue distribution, plasma.

The protein localises to the secreted. This is Alpha-1-antiproteinase from Notamacropus eugenii (Tammar wallaby).